Here is a 49-residue protein sequence, read N- to C-terminus: Large ribosomal subunit protein bL33B (49 aa).

This sequence belongs to the bacterial ribosomal protein bL33 family.

This chain is Large ribosomal subunit protein bL33B, found in Bacillus cereus (strain ATCC 14579 / DSM 31 / CCUG 7414 / JCM 2152 / NBRC 15305 / NCIMB 9373 / NCTC 2599 / NRRL B-3711).